We begin with the raw amino-acid sequence, 308 residues long: NAD-dependent protein deacylase SIR4 (308 aa).

A mitochondrion-targeting transit peptide spans 1-16 (MAATKLHPALRNAIRA). The region spanning 28–308 (TFDVQEGIKL…EVLPAALRQL (281 aa)) is the Deacetylase sirtuin-type domain. NAD(+) is bound by residues 53-73 (GAGISTDSGIPDYRSPGRPPH) and 129-132 (QNVD). Residue histidine 147 is the Proton acceptor of the active site. Residues cysteine 155, cysteine 158, cysteine 211, and cysteine 214 each contribute to the Zn(2+) site. NAD(+)-binding positions include 251–253 (GTS), 277–279 (NSG), and isoleucine 297.

The protein belongs to the sirtuin family. Class II subfamily. Zn(2+) serves as cofactor.

It localises to the mitochondrion matrix. It catalyses the reaction N(6)-acetyl-L-lysyl-[protein] + NAD(+) + H2O = 2''-O-acetyl-ADP-D-ribose + nicotinamide + L-lysyl-[protein]. Its function is as follows. NAD-dependent protein deacylase. Catalyzes the NAD-dependent hydrolysis of acyl groups from lysine residues. The chain is NAD-dependent protein deacylase SIR4 from Monosiga brevicollis (Choanoflagellate).